The primary structure comprises 190 residues: Lipid A acyltransferase PagP (190 aa).

Positions Met-1–Ala-29 are cleaved as a signal peptide. Active-site residues include His-62, Asp-105, and Ser-106.

The protein belongs to the lipid A palmitoyltransferase family. Homodimer.

The protein resides in the cell outer membrane. The enzyme catalyses a lipid A + a 1,2-diacyl-sn-glycero-3-phosphocholine = a hepta-acyl lipid A + a 2-acyl-sn-glycero-3-phosphocholine. The catalysed reaction is a lipid IVA + a 1,2-diacyl-sn-glycero-3-phosphocholine = a lipid IVB + a 2-acyl-sn-glycero-3-phosphocholine. It carries out the reaction a lipid IIA + a 1,2-diacyl-sn-glycero-3-phosphocholine = a lipid IIB + a 2-acyl-sn-glycero-3-phosphocholine. Its function is as follows. Transfers a fatty acid residue from the sn-1 position of a phospholipid to the N-linked hydroxyfatty acid chain on the proximal unit of lipid A or its precursors. Required for resistance to cationic antimicrobial peptides (CAMPs). Modifications of lipid A with an acyl chain allow to evade host immune defenses by resisting antimicrobial peptides and attenuating the inflammatory response to infection triggered by lipopolysaccharide through the Toll-like receptor 4 (TLR4) signal transduction pathway. In Salmonella typhimurium (strain LT2 / SGSC1412 / ATCC 700720), this protein is Lipid A acyltransferase PagP.